Reading from the N-terminus, the 88-residue chain is Small ribosomal subunit protein bS20 (88 aa).

2 disordered regions span residues Met1–Ala23 and Pro69–Ala88. The span at Pro69–Thr81 shows a compositional bias: basic residues.

Belongs to the bacterial ribosomal protein bS20 family.

Binds directly to 16S ribosomal RNA. This Alcanivorax borkumensis (strain ATCC 700651 / DSM 11573 / NCIMB 13689 / SK2) protein is Small ribosomal subunit protein bS20.